Consider the following 149-residue polypeptide: Nucleoside diphosphate kinase (149 aa).

The ATP site is built by Lys-9, Phe-57, Arg-85, Thr-91, Arg-102, and Asn-112. The Pros-phosphohistidine intermediate role is filled by His-115.

This sequence belongs to the NDK family. Homotetramer. It depends on Mg(2+) as a cofactor.

It localises to the cytoplasm. The enzyme catalyses a 2'-deoxyribonucleoside 5'-diphosphate + ATP = a 2'-deoxyribonucleoside 5'-triphosphate + ADP. It carries out the reaction a ribonucleoside 5'-diphosphate + ATP = a ribonucleoside 5'-triphosphate + ADP. In terms of biological role, major role in the synthesis of nucleoside triphosphates other than ATP. The ATP gamma phosphate is transferred to the NDP beta phosphate via a ping-pong mechanism, using a phosphorylated active-site intermediate. This chain is Nucleoside diphosphate kinase, found in Acaryochloris marina (strain MBIC 11017).